A 156-amino-acid polypeptide reads, in one-letter code: Ribosomal RNA large subunit methyltransferase H (156 aa).

S-adenosyl-L-methionine is bound by residues leucine 73, glycine 104, and 123–128 (LSSLTL).

The protein belongs to the RNA methyltransferase RlmH family. As to quaternary structure, homodimer.

It is found in the cytoplasm. The catalysed reaction is pseudouridine(1915) in 23S rRNA + S-adenosyl-L-methionine = N(3)-methylpseudouridine(1915) in 23S rRNA + S-adenosyl-L-homocysteine + H(+). In terms of biological role, specifically methylates the pseudouridine at position 1915 (m3Psi1915) in 23S rRNA. This Neisseria meningitidis serogroup A / serotype 4A (strain DSM 15465 / Z2491) protein is Ribosomal RNA large subunit methyltransferase H.